We begin with the raw amino-acid sequence, 261 residues long: Ribonuclease HII (261 aa).

The 190-residue stretch at 71 to 260 folds into the RNase H type-2 domain; that stretch reads HYIAGVDEVG…LHKYRHNTLL (190 aa). Positions 77, 78, and 169 each coordinate a divalent metal cation.

It belongs to the RNase HII family. The cofactor is Mn(2+). Requires Mg(2+) as cofactor.

The protein localises to the cytoplasm. The enzyme catalyses Endonucleolytic cleavage to 5'-phosphomonoester.. Its function is as follows. Endonuclease that specifically degrades the RNA of RNA-DNA hybrids. The sequence is that of Ribonuclease HII from Oceanobacillus iheyensis (strain DSM 14371 / CIP 107618 / JCM 11309 / KCTC 3954 / HTE831).